Reading from the N-terminus, the 286-residue chain is Acetyl-coenzyme A carboxylase carboxyl transferase subunit beta (286 aa).

One can recognise a CoA carboxyltransferase N-terminal domain in the interval 23 to 286; sequence IWVKCNNCNQ…ITNKPEPKKE (264 aa). Residues C27, C30, C46, and C49 each coordinate Zn(2+). The segment at 27–49 adopts a C4-type zinc-finger fold; it reads CNNCNQMIYKIELEKNLEVCPKC.

The protein belongs to the AccD/PCCB family. As to quaternary structure, acetyl-CoA carboxylase is a heterohexamer composed of biotin carboxyl carrier protein (AccB), biotin carboxylase (AccC) and two subunits each of ACCase subunit alpha (AccA) and ACCase subunit beta (AccD). Zn(2+) serves as cofactor.

It is found in the cytoplasm. It catalyses the reaction N(6)-carboxybiotinyl-L-lysyl-[protein] + acetyl-CoA = N(6)-biotinyl-L-lysyl-[protein] + malonyl-CoA. Its pathway is lipid metabolism; malonyl-CoA biosynthesis; malonyl-CoA from acetyl-CoA: step 1/1. Its function is as follows. Component of the acetyl coenzyme A carboxylase (ACC) complex. Biotin carboxylase (BC) catalyzes the carboxylation of biotin on its carrier protein (BCCP) and then the CO(2) group is transferred by the transcarboxylase to acetyl-CoA to form malonyl-CoA. The sequence is that of Acetyl-coenzyme A carboxylase carboxyl transferase subunit beta from Wigglesworthia glossinidia brevipalpis.